A 2299-amino-acid polypeptide reads, in one-letter code: Acetyl-CoA carboxylase dmxL1 (2299 aa).

Residues 21 to 39 (TSIPASVPASAPPSSSAPH) are compositionally biased toward low complexity. The interval 21-41 (TSIPASVPASAPPSSSAPHAA) is disordered. Residues 75–583 (VITNVLIANN…TTGWLDELIT (509 aa)) enclose the Biotin carboxylation domain. Residues 227-424 (QVAIDADGIV…LPAAQLQIAM (198 aa)) form the ATP-grasp 1 domain. 258–315 (AKEIGFPVMIKASEGGGGKGIRKCEQEEGFEALYNAASSEIPGSPIFIMKLAGNARHL) contacts ATP. Mg(2+) contacts are provided by glutamate 381, glutamate 395, and asparagine 397. Residues glutamate 381, glutamate 395, and asparagine 397 each coordinate Mn(2+). The region spanning 710–784 (LEQENDPTQL…EPGDVLGILT (75 aa)) is the Biotinyl-binding domain. Lysine 751 is subject to N6-biotinyllysine. The segment at 1159 to 1208 (DMEMSSQLSTPSTPATPPTPPYENGKQSKGVGSISDMSNLIENPDKEPTR) is disordered. One can recognise a CoA carboxyltransferase N-terminal domain in the interval 1539-1887 (PTKALEWLQP…KKNTLVPIGP (349 aa)). In terms of domain architecture, CoA carboxyltransferase C-terminal spans 1891–2205 (PWDRDIVCSP…EEHILKRIAT (315 aa)).

Biotin serves as cofactor. It depends on Mg(2+) as a cofactor. The cofactor is Mn(2+).

It catalyses the reaction hydrogencarbonate + acetyl-CoA + ATP = malonyl-CoA + ADP + phosphate + H(+). The enzyme catalyses N(6)-biotinyl-L-lysyl-[protein] + hydrogencarbonate + ATP = N(6)-carboxybiotinyl-L-lysyl-[protein] + ADP + phosphate + H(+). Its pathway is secondary metabolite biosynthesis. It participates in lipid metabolism; malonyl-CoA biosynthesis; malonyl-CoA from acetyl-CoA: step 1/1. In terms of biological role, acetyl-CoA carboxylase; part of the gene cluster that mediates the biosynthesis of the dimeric xanthones cryptosporioptides. The pathway begins with the synthesis of atrochrysone thioester by the polyketide synthase dmx-nrPKS. The atrochrysone carboxyl ACP thioesterase dmxR1 then breaks the thioester bond and releases the atrochrysone carboxylic acid from dmx-nrPKS. Atrochrysone carboxylic acid is decarboxylated by the decarboxylase dmxR15, and oxidized by the anthrone oxygenase dmxR16 to yield emodin. Emodin is then reduced to emodin hydroquinone by the oxidoreductase dmxR7. A-ring reduction by the short chain dehydrogenase dmxR18, dehydration by the scytalone dehydratase-like protein dmxR17 and probable spontaneous re-oxidation, results in overall deoxygenation to chrysophanol. Baeyer-Villiger oxidation by the Baeyer-Villiger monooxygenase (BVMO) dmxR6 then yields monodictylactone in equilibrium with monodictyphenone. In the case of the cryptosporioptides biosynthesis, monodictylactone is reduced at C-12 to an alcohol (by the short chain dehydrogenases dmxR12 or dmxR8) and hydroxylated at C-5 by dmxR9, yielding the electron-rich aromatic which could eliminate H(2)O to form the ortho-quinonemethide, followed by tautomerisation to paraquinone and complete the formal reduction to produce the 10-methylgroup. Conjugate addition of C-4a-OH to the resulting paraquinone by the monooxygenase dmxR10 then gives cyclohexadienone, which is then reduced at C-5 by the short chain dehydrogenase dmxR3 to give the dihydroxanthone. The 6,7-epoxide in the cryptosporioptides could be introduced by the cytochrome P450 monooxygenase dmxL3. The highly reducing PKS dmxL2 manufactures butyrate, which is further carboxylated by dmxL1 to form ethylmalonate. It is not yet clear whether the carboxylation occurs while the butyrate is attached to the ACP of dmxL2, but this unusual fungal metabolite could then be esterified to O-5 by the O-acetyltransferase dmxR13. Finally, dimerization performed by dmxR5 gives the observed dimers cryptosporioptides A, B and C as the final products of the pathway. The sequence is that of Acetyl-CoA carboxylase dmxL1 from Cryptosporiopsis sp. (strain 8999).